A 56-amino-acid chain; its full sequence is MLTRFLGPRYRQLARNWVPTASLWGAVGAVGLVWATDWRLILDWVPYINGKFKKDD.

Residues 1–12 (MLTRFLGPRYRQ) lie on the Mitochondrial matrix side of the membrane. A helical transmembrane segment spans residues 13-35 (LARNWVPTASLWGAVGAVGLVWA). Residues 36–56 (TDWRLILDWVPYINGKFKKDD) lie on the Mitochondrial intermembrane side of the membrane.

It belongs to the UQCR11/QCR10 family. In terms of assembly, component of the ubiquinol-cytochrome c oxidoreductase (cytochrome b-c1 complex, complex III, CIII), a multisubunit enzyme composed of 11 subunits. The complex is composed of 3 respiratory subunits cytochrome b, cytochrome c1 and Rieske protein UQCRFS1, 2 core protein subunits UQCRC1/QCR1 and UQCRC2/QCR2, and 6 low-molecular weight protein subunits UQCRH/QCR6, UQCRB/QCR7, UQCRQ/QCR8, UQCR10/QCR9, UQCR11/QCR10 and subunit 9, the cleavage product of Rieske protein UQCRFS1. The complex exists as an obligatory dimer and forms supercomplexes (SCs) in the inner mitochondrial membrane with NADH-ubiquinone oxidoreductase (complex I, CI) and cytochrome c oxidase (complex IV, CIV), resulting in different assemblies (supercomplex SCI(1)III(2)IV(1) and megacomplex MCI(2)III(2)IV(2)).

The protein localises to the mitochondrion inner membrane. In terms of biological role, component of the ubiquinol-cytochrome c oxidoreductase, a multisubunit transmembrane complex that is part of the mitochondrial electron transport chain which drives oxidative phosphorylation. The respiratory chain contains 3 multisubunit complexes succinate dehydrogenase (complex II, CII), ubiquinol-cytochrome c oxidoreductase (cytochrome b-c1 complex, complex III, CIII) and cytochrome c oxidase (complex IV, CIV), that cooperate to transfer electrons derived from NADH and succinate to molecular oxygen, creating an electrochemical gradient over the inner membrane that drives transmembrane transport and the ATP synthase. The cytochrome b-c1 complex catalyzes electron transfer from ubiquinol to cytochrome c, linking this redox reaction to translocation of protons across the mitochondrial inner membrane, with protons being carried across the membrane as hydrogens on the quinol. In the process called Q cycle, 2 protons are consumed from the matrix, 4 protons are released into the intermembrane space and 2 electrons are passed to cytochrome c. QCR10 has a role in CIII assembly and RIP1 stability. This chain is Cytochrome b-c1 complex subunit 10 (UQCR11), found in Bos taurus (Bovine).